The chain runs to 378 residues: Mannitol-1-phosphate 5-dehydrogenase (378 aa).

Residue 4–15 (SVHFGAGNIGRG) coordinates NAD(+).

Belongs to the mannitol dehydrogenase family.

The catalysed reaction is D-mannitol 1-phosphate + NAD(+) = beta-D-fructose 6-phosphate + NADH + H(+). The protein is Mannitol-1-phosphate 5-dehydrogenase of Streptococcus pneumoniae (strain JJA).